The following is a 2182-amino-acid chain: Autophagy-related protein 2 (2182 aa).

Disordered stretches follow at residues 291 to 375, 392 to 426, 523 to 630, 663 to 682, 736 to 758, and 793 to 816; these read SPSL…PLAD, EQDY…ATPR, YTHE…STTL, DIDP…VATP, GAFS…SSVE, and DKKP…SKET. Composition is skewed to polar residues over residues 303 to 313 and 322 to 331; these read NPPSRQATELS and VSSSQASIRS. Basic and acidic residues predominate over residues 332-347; the sequence is NEPESASHHSLPENDH. Composition is skewed to acidic residues over residues 528-540 and 613-624; these read AENE…EQTT and WDDDYDDPEEEP. Over residues 745 to 758 the composition is skewed to polar residues; it reads HAQQRSSQGTSSVE. A compositionally biased stretch (basic and acidic residues) spans 793 to 813; that stretch reads DKKPSPAEGSKQDTASKDAPS.

The protein belongs to the ATG2 family. Interacts with ATG18.

It localises to the preautophagosomal structure membrane. It is found in the endoplasmic reticulum membrane. It catalyses the reaction a 1,2-diacyl-sn-glycero-3-phosphocholine(in) = a 1,2-diacyl-sn-glycero-3-phosphocholine(out). The catalysed reaction is a 1,2-diacyl-sn-glycero-3-phospho-L-serine(in) = a 1,2-diacyl-sn-glycero-3-phospho-L-serine(out). It carries out the reaction a 1,2-diacyl-sn-glycero-3-phosphoethanolamine(in) = a 1,2-diacyl-sn-glycero-3-phosphoethanolamine(out). In terms of biological role, lipid transfer protein required for autophagosome completion and peroxisome degradation and peroxisome degradation. Tethers the edge of the isolation membrane (IM) to the endoplasmic reticulum (ER) and mediates direct lipid transfer from ER to IM for IM expansion. ATG2 binds to the ER exit site (ERES), which is the membrane source for autophagosome formation, using basic residues in its N-terminal region (NR) and to the expanding edge of the IM through its C-terminal region. The latter binding is assisted by an ATG18-PtdIns3P interaction. ATG2 then extracts phospholipids from the membrane source using its NR and transfers them to ATG9 to the IM through its predicted beta-sheet-rich structure for membrane expansion. Autophagy is required for proper vegetative growth, asexual/sexual reproduction, and full virulence. Autophagy is particularly involved in the biosynthesis of deoxynivalenol (DON), an important virulence determinant. The protein is Autophagy-related protein 2 of Gibberella zeae (strain ATCC MYA-4620 / CBS 123657 / FGSC 9075 / NRRL 31084 / PH-1) (Wheat head blight fungus).